A 248-amino-acid chain; its full sequence is tRNA (guanine-N(1)-)-methyltransferase (248 aa).

S-adenosyl-L-methionine-binding positions include Gly117 and 137-142 (IGDFVL).

This sequence belongs to the RNA methyltransferase TrmD family. Homodimer.

Its subcellular location is the cytoplasm. The catalysed reaction is guanosine(37) in tRNA + S-adenosyl-L-methionine = N(1)-methylguanosine(37) in tRNA + S-adenosyl-L-homocysteine + H(+). Functionally, specifically methylates guanosine-37 in various tRNAs. The polypeptide is tRNA (guanine-N(1)-)-methyltransferase (Polynucleobacter necessarius subsp. necessarius (strain STIR1)).